Here is a 309-residue protein sequence, read N- to C-terminus: MQKIVIALGGNALGNNPTEQKDLVQLPARQAVALLKQGYQILLGHGNGPQVGMIYNAFSAAKQVNPNTPTVPFAESGAMSQGYIGLHLLTALYNELLHQKLPHQAVYFLTQTLVEASDPAFQNPNKPVGPFYNTEETARSANPNSTVVEDAGRGWRKVVASPKPVDVLGIDAIKSSFNQGNLVIVGGGGGVPTIKTKSGYATVDGVIDKDLALSEIAIKVEADLFVILTAVDFVYINYGQPNEQKLTCINTKEAKTLMAANQFAKGSMLPKVEACLNFVQSGTNKTAIIAQLDQLAAAIAGKIGTKIVK.

Positions N125 to N144 are disordered.

Belongs to the carbamate kinase family.

The chain is Carbamate kinase-like protein from Mycoplasma pneumoniae (strain ATCC 29342 / M129 / Subtype 1) (Mycoplasmoides pneumoniae).